Reading from the N-terminus, the 912-residue chain is Protein translocase subunit SecA (912 aa).

ATP-binding positions include glutamine 87, 105-109 (GEGKT), and aspartate 499. Positions 897, 899, 908, and 909 each coordinate Zn(2+).

This sequence belongs to the SecA family. Monomer and homodimer. Part of the essential Sec protein translocation apparatus which comprises SecA, SecYEG and auxiliary proteins SecDF-YajC and YidC. Zn(2+) is required as a cofactor.

Its subcellular location is the cell inner membrane. The protein resides in the cytoplasm. It catalyses the reaction ATP + H2O + cellular proteinSide 1 = ADP + phosphate + cellular proteinSide 2.. Its function is as follows. Part of the Sec protein translocase complex. Interacts with the SecYEG preprotein conducting channel. Has a central role in coupling the hydrolysis of ATP to the transfer of proteins into and across the cell membrane, serving both as a receptor for the preprotein-SecB complex and as an ATP-driven molecular motor driving the stepwise translocation of polypeptide chains across the membrane. This is Protein translocase subunit SecA from Rhizorhabdus wittichii (strain DSM 6014 / CCUG 31198 / JCM 15750 / NBRC 105917 / EY 4224 / RW1) (Sphingomonas wittichii).